Consider the following 205-residue polypeptide: Ribosome maturation factor RimP (205 aa).

The span at 1–12 (MSNAEAQASSDH) shows a compositional bias: polar residues. Disordered regions lie at residues 1–24 (MSNA…APAH) and 186–205 (FSHL…SEEA).

Belongs to the RimP family.

The protein localises to the cytoplasm. Required for maturation of 30S ribosomal subunits. This chain is Ribosome maturation factor RimP, found in Pseudarthrobacter chlorophenolicus (strain ATCC 700700 / DSM 12829 / CIP 107037 / JCM 12360 / KCTC 9906 / NCIMB 13794 / A6) (Arthrobacter chlorophenolicus).